Consider the following 342-residue polypeptide: MRIEALNTAPDATEVRFEEQIRPQSMSDFAGQKKLTDNLKVFITAARKRGDALDHVLLSGPPGLGKTTLAHIIAAEMGGGIKITSGPLIDKAGNLAGLLTSLKKGDILFIDEIHRLAPAVEEYLYSAMEDYRIDILLDSGPASRAVQLKLEPFTLVGATTRSGLLTSPLRARFGINSRLDYYSPELLQSIIVRAAGILNIGVDEDAAMEIARRSRGTPRIANRLLRRARDFAQVANEASISLAVARRTLESLEIDEGGLDDMDKKILEAIVRKFNGGPVGVASLAVSVGEEQDTIEEVYEPYLIQVGYLARTPRGRVATRLAMQRFSYPGMQDHGPLFDHNS.

The tract at residues 1-182 (MRIEALNTAP…FGINSRLDYY (182 aa)) is large ATPase domain (RuvB-L). Residues Ile21, Arg22, Gly63, Lys66, Thr67, Thr68, 129-131 (EDY), Arg172, Tyr182, and Arg219 each bind ATP. Mg(2+) is bound at residue Thr67. The interval 183-253 (SPELLQSIIV…VARRTLESLE (71 aa)) is small ATPAse domain (RuvB-S). The tract at residues 256–342 (EGGLDDMDKK…DHGPLFDHNS (87 aa)) is head domain (RuvB-H). Arg311 and Arg316 together coordinate DNA.

This sequence belongs to the RuvB family. Homohexamer. Forms an RuvA(8)-RuvB(12)-Holliday junction (HJ) complex. HJ DNA is sandwiched between 2 RuvA tetramers; dsDNA enters through RuvA and exits via RuvB. An RuvB hexamer assembles on each DNA strand where it exits the tetramer. Each RuvB hexamer is contacted by two RuvA subunits (via domain III) on 2 adjacent RuvB subunits; this complex drives branch migration. In the full resolvosome a probable DNA-RuvA(4)-RuvB(12)-RuvC(2) complex forms which resolves the HJ.

Its subcellular location is the cytoplasm. It catalyses the reaction ATP + H2O = ADP + phosphate + H(+). Functionally, the RuvA-RuvB-RuvC complex processes Holliday junction (HJ) DNA during genetic recombination and DNA repair, while the RuvA-RuvB complex plays an important role in the rescue of blocked DNA replication forks via replication fork reversal (RFR). RuvA specifically binds to HJ cruciform DNA, conferring on it an open structure. The RuvB hexamer acts as an ATP-dependent pump, pulling dsDNA into and through the RuvAB complex. RuvB forms 2 homohexamers on either side of HJ DNA bound by 1 or 2 RuvA tetramers; 4 subunits per hexamer contact DNA at a time. Coordinated motions by a converter formed by DNA-disengaged RuvB subunits stimulates ATP hydrolysis and nucleotide exchange. Immobilization of the converter enables RuvB to convert the ATP-contained energy into a lever motion, pulling 2 nucleotides of DNA out of the RuvA tetramer per ATP hydrolyzed, thus driving DNA branch migration. The RuvB motors rotate together with the DNA substrate, which together with the progressing nucleotide cycle form the mechanistic basis for DNA recombination by continuous HJ branch migration. Branch migration allows RuvC to scan DNA until it finds its consensus sequence, where it cleaves and resolves cruciform DNA. The sequence is that of Holliday junction branch migration complex subunit RuvB from Chlorobaculum parvum (strain DSM 263 / NCIMB 8327) (Chlorobium vibrioforme subsp. thiosulfatophilum).